Consider the following 148-residue polypeptide: Protein RESISTANCE TO POWDERY MILDEW 8.1 (148 aa).

The RPW8 domain maps to 1–148 (MPIGELAIGA…VISACSKIRA (148 aa)). Residues 7 to 23 (AIGAVLGVGAQAIYDRF) traverse the membrane as a helical segment. The stretch at 120–140 (DDIKEIKAKISEMDTKLAEVI) forms a coiled coil.

It belongs to the plant RPW8 protein family.

It localises to the membrane. Functionally, disease resistance (R) protein that induces localized, salicylic acid-dependent defenses. Confers resistance to powdery mildew (e.g. Erysiphe cichoracearum UCSC1). The protein is Protein RESISTANCE TO POWDERY MILDEW 8.1 of Arabidopsis thaliana (Mouse-ear cress).